Consider the following 252-residue polypeptide: 3-dehydroquinate dehydratase (252 aa).

Residues 47 to 49 and R83 each bind 3-dehydroquinate; that span reads EWR. Catalysis depends on H144, which acts as the Proton donor/acceptor. Residue K171 is the Schiff-base intermediate with substrate of the active site. Residues R213, S232, and Q236 each contribute to the 3-dehydroquinate site.

The protein belongs to the type-I 3-dehydroquinase family. In terms of assembly, homodimer.

The enzyme catalyses 3-dehydroquinate = 3-dehydroshikimate + H2O. The protein operates within metabolic intermediate biosynthesis; chorismate biosynthesis; chorismate from D-erythrose 4-phosphate and phosphoenolpyruvate: step 3/7. Functionally, involved in the third step of the chorismate pathway, which leads to the biosynthesis of aromatic amino acids. Catalyzes the cis-dehydration of 3-dehydroquinate (DHQ) and introduces the first double bond of the aromatic ring to yield 3-dehydroshikimate. The sequence is that of 3-dehydroquinate dehydratase from Lactiplantibacillus plantarum (strain ATCC BAA-793 / NCIMB 8826 / WCFS1) (Lactobacillus plantarum).